The following is a 143-amino-acid chain: Deoxyuridine 5'-triphosphate nucleotidohydrolase (143 aa).

Residues S65, V78, R132, and G138 each contribute to the dUMP site.

This sequence belongs to the dUTPase family. Homotrimer. The cofactor is Mg(2+).

The enzyme catalyses dUTP + H2O = dUMP + diphosphate + H(+). It functions in the pathway pyrimidine metabolism; dUMP biosynthesis; dUMP from dCTP (dUTP route): step 2/2. In terms of biological role, involved in nucleotide metabolism via production of dUMP, the immediate precursor of thymidine nucleotides, and decreases the intracellular concentration of dUTP so that uracil cannot be incorporated into DNA. The polypeptide is Deoxyuridine 5'-triphosphate nucleotidohydrolase (DUT1) (Antonospora locustae (Microsporidian parasite)).